The following is a 444-amino-acid chain: D(2) dopamine receptor (444 aa).

Residues 1 to 37 (MDPLNLSWYDDDLERQNWSRPFNGSEGKPDRPHYNYY) are Extracellular-facing. N-linked (GlcNAc...) asparagine glycans are attached at residues asparagine 5, asparagine 17, and asparagine 23. The helical transmembrane segment at 38-60 (AMLLTLLIFIIVFGNVLVCMAVS) threads the bilayer. The Cytoplasmic portion of the chain corresponds to 61–70 (REKALQTTTN). A helical membrane pass occupies residues 71 to 93 (YLIVSLAVADLLVATLVMPWVVY). Residues 94–108 (LEVVGEWKFSRIHCD) lie on the Extracellular side of the membrane. The cysteines at positions 107 and 182 are disulfide-linked. A helical transmembrane segment spans residues 109-130 (IFVTLDVMMCTASILNLCAISI). At 131–151 (DRYTAVAMPMLYNTRYSSKRR) the chain is on the cytoplasmic side. Residues 152 to 172 (VTVMIAIVWVLSFTISCPLLF) traverse the membrane as a helical segment. At 173–188 (GLNNTDQNECIIANPA) the chain is on the extracellular side. Residues 189-213 (FVVYSSIVSFYVPFIVTLLVYIKIY) traverse the membrane as a helical segment. The interaction with PPP1R9B stretch occupies residues 211–374 (KIYIVLRKRR…SQQKEKKATQ (164 aa)). Topologically, residues 214–374 (IVLRKRRKRV…SQQKEKKATQ (161 aa)) are cytoplasmic. Positions 282-329 (EMLSSTSPPERTRYSPIPPSHHQLTLPDPSHHGLHSNPDSPAKPEKNG) are disordered. The chain crosses the membrane as a helical span at residues 375–396 (MLAIVLGVFIICWLPFFITHIL). Residues 397 to 410 (NIHCDCNIPPVLYS) lie on the Extracellular side of the membrane. An intrachain disulfide couples cysteine 400 to cysteine 402. Residues 411 to 432 (AFTWLGYVNSAVNPIIYTTFNI) form a helical membrane-spanning segment. Residues 433-444 (EFRKAFMKILHC) lie on the Cytoplasmic side of the membrane. Cysteine 444 carries S-palmitoyl cysteine lipidation.

This sequence belongs to the G-protein coupled receptor 1 family. As to quaternary structure, forms homo- and heterooligomers with DRD4. The interaction with DRD4 may modulate agonist-induced downstream signaling. Interacts with CADPS and CADPS2. Interacts with GPRASP1, PPP1R9B and CLIC6. Interacts with ARRB2. Interacts with HTR2A. Interacts with DRD1. Interacts with KCNA2. Palmitoylated. Palmitoylation which is required for proper localization to the plasma membrane and stability of the receptor could be carried on by ZDHHC4, ZDHHC3 and ZDHHC8. In terms of tissue distribution, expressed in retinal hyaloid vessels at postnatal day 6. As to expression, expressed in the pituitary gland, stratum, brain stem and cortex. Expressed in the brain stem.

The protein resides in the cell membrane. Its subcellular location is the golgi apparatus membrane. Dopamine receptor whose activity is mediated by G proteins which inhibit adenylyl cyclase. Positively regulates postnatal regression of retinal hyaloid vessels via suppression of VEGFR2/KDR activity, downstream of OPN5. This Mus musculus (Mouse) protein is D(2) dopamine receptor (Drd2).